Here is a 182-residue protein sequence, read N- to C-terminus: Large ribosomal subunit protein bL25 (182 aa).

The protein belongs to the bacterial ribosomal protein bL25 family. CTC subfamily. In terms of assembly, part of the 50S ribosomal subunit; part of the 5S rRNA/L5/L18/L25 subcomplex. Contacts the 5S rRNA. Binds to the 5S rRNA independently of L5 and L18.

This is one of the proteins that binds to the 5S RNA in the ribosome where it forms part of the central protuberance. The chain is Large ribosomal subunit protein bL25 from Borreliella burgdorferi (strain ATCC 35210 / DSM 4680 / CIP 102532 / B31) (Borrelia burgdorferi).